Reading from the N-terminus, the 72-residue chain is uncharacterized protein (72 aa).

Its subcellular location is the cytoplasm. It is found in the nucleus. This is an uncharacterized protein from Saccharomyces cerevisiae (strain ATCC 204508 / S288c) (Baker's yeast).